Reading from the N-terminus, the 372-residue chain is Chaperone protein DnaJ (372 aa).

One can recognise a J domain in the interval 5–69 (DYYEVLGLTK…QKKARYDQFG (65 aa)). The segment at 129–211 (GKETEIEIPK…CRGEGKVQKR (83 aa)) adopts a CR-type zinc-finger fold. The Zn(2+) site is built by cysteine 142, cysteine 145, cysteine 159, cysteine 162, cysteine 185, cysteine 188, cysteine 199, and cysteine 202. 4 CXXCXGXG motif repeats span residues 142–149 (CETCHGSG), 159–166 (CSTCNGAG), 185–192 (CTTCHGTG), and 199–206 (CSTCRGEG).

Belongs to the DnaJ family. As to quaternary structure, homodimer. It depends on Zn(2+) as a cofactor.

It localises to the cytoplasm. Its function is as follows. Participates actively in the response to hyperosmotic and heat shock by preventing the aggregation of stress-denatured proteins and by disaggregating proteins, also in an autonomous, DnaK-independent fashion. Unfolded proteins bind initially to DnaJ; upon interaction with the DnaJ-bound protein, DnaK hydrolyzes its bound ATP, resulting in the formation of a stable complex. GrpE releases ADP from DnaK; ATP binding to DnaK triggers the release of the substrate protein, thus completing the reaction cycle. Several rounds of ATP-dependent interactions between DnaJ, DnaK and GrpE are required for fully efficient folding. Also involved, together with DnaK and GrpE, in the DNA replication of plasmids through activation of initiation proteins. The sequence is that of Chaperone protein DnaJ from Lysinibacillus sphaericus (strain C3-41).